The following is a 199-amino-acid chain: Small ribosomal subunit protein uS4 (199 aa).

An S4 RNA-binding domain is found at 91–154 (SRLDNLVYRM…RGLQLIKDAL (64 aa)).

Belongs to the universal ribosomal protein uS4 family. Part of the 30S ribosomal subunit. Contacts protein S5. The interaction surface between S4 and S5 is involved in control of translational fidelity.

Functionally, one of the primary rRNA binding proteins, it binds directly to 16S rRNA where it nucleates assembly of the body of the 30S subunit. In terms of biological role, with S5 and S12 plays an important role in translational accuracy. This Brevibacillus brevis (strain 47 / JCM 6285 / NBRC 100599) protein is Small ribosomal subunit protein uS4.